Consider the following 224-residue polypeptide: Large ribosomal subunit protein uL3 (224 aa).

Position 159 is an N5-methylglutamine (glutamine 159).

Belongs to the universal ribosomal protein uL3 family. In terms of assembly, part of the 50S ribosomal subunit. Forms a cluster with proteins L14 and L19. Methylated by PrmB.

In terms of biological role, one of the primary rRNA binding proteins, it binds directly near the 3'-end of the 23S rRNA, where it nucleates assembly of the 50S subunit. The protein is Large ribosomal subunit protein uL3 of Herminiimonas arsenicoxydans.